The following is a 134-amino-acid chain: Cytochrome b (134 aa).

Transmembrane regions (helical) follow at residues 33-53 (FGSL…FLAI), 77-98 (WLLR…YLHV), and 113-133 (WNIG…GYVL). Heme b is bound by residues His-83 and His-97.

Belongs to the cytochrome b family. The cytochrome bc1 complex contains 11 subunits: 3 respiratory subunits (MT-CYB, CYC1 and UQCRFS1), 2 core proteins (UQCRC1 and UQCRC2) and 6 low-molecular weight proteins (UQCRH/QCR6, UQCRB/QCR7, UQCRQ/QCR8, UQCR10/QCR9, UQCR11/QCR10 and a cleavage product of UQCRFS1). This cytochrome bc1 complex then forms a dimer. It depends on heme b as a cofactor.

The protein localises to the mitochondrion inner membrane. In terms of biological role, component of the ubiquinol-cytochrome c reductase complex (complex III or cytochrome b-c1 complex) that is part of the mitochondrial respiratory chain. The b-c1 complex mediates electron transfer from ubiquinol to cytochrome c. Contributes to the generation of a proton gradient across the mitochondrial membrane that is then used for ATP synthesis. In Platyrrhinus helleri (Heller's broad-nosed bat), this protein is Cytochrome b (MT-CYB).